The sequence spans 248 residues: MLLCSLTLTLLWMVASGLECDVKEVCLGSPGIPGTPGSHGLPGRDGRDGIKGDPGPPGPMGPPGGMPGLPGRDGMTGAPGLPGERGEKGEPGERGPPGFPAYLDEELQGTLHEIRHQVLQSQGVLRLQGSVLAVGEKVFSTNGQSVNFDAIKELCARVGGHIAAPRSPEENEAIVSIVKKYNTYAYLGLVEGPTAGDFYYLDGAPVNYTNWYPGEPRGRGKEKCVEIYTDGQWNDKNCLQYRLAICEF.

A signal peptide spans 1–20 (MLLCSLTLTLLWMVASGLEC). A Collagen-like domain is found at 28-100 (GSPGIPGTPG…PGERGPPGFP (73 aa)). The disordered stretch occupies residues 29-102 (SPGIPGTPGS…ERGPPGFPAY (74 aa)). 4-hydroxyproline is present on residues P30, P33, P36, P42, P54, P57, P63, P67, and P70. A compositionally biased stretch (basic and acidic residues) spans 42-51 (PGRDGRDGIK). Over residues 54 to 65 (PGPPGPMGPPGG) the composition is skewed to pro residues. A compositionally biased stretch (low complexity) spans 69–82 (LPGRDGMTGAPGLP). Residues 84-93 (ERGEKGEPGE) show a composition bias toward basic and acidic residues. Residues 132 to 248 (LAVGEKVFST…LQYRLAICEF (117 aa)) form the C-type lectin domain. Cystine bridges form between C155/C246 and C224/C238. N-linked (GlcNAc...) asparagine glycosylation is present at N207. Positions 215, 217, 234, and 235 each coordinate Ca(2+).

This sequence belongs to the SFTPA family. In terms of assembly, oligomeric complex of 6 set of homotrimers.

Its subcellular location is the secreted. The protein resides in the extracellular space. It is found in the extracellular matrix. The protein localises to the surface film. Functionally, in presence of calcium ions, it binds to surfactant phospholipids and contributes to lower the surface tension at the air-liquid interface in the alveoli of the mammalian lung and is essential for normal respiration. Enhances the expression of MYO18A/SP-R210 on alveolar macrophages. The sequence is that of Pulmonary surfactant-associated protein A (SFTPA1) from Bos taurus (Bovine).